Consider the following 475-residue polypeptide: F-box protein At3g59150 (475 aa).

The F-box domain occupies Gly-12–Asp-58.

This is F-box protein At3g59150 from Arabidopsis thaliana (Mouse-ear cress).